A 949-amino-acid polypeptide reads, in one-letter code: MMTSNILSRFLPPNNSPSVYEAIRQNDADSDSSDVEERAGLTLEDGHGGHYTDHELQDAMVDADQSELPSPDDAFLARESHHRVPSEGPSKSTSRRRKNSRPRWMQAASPGQDFEYGDDDDVPASLLVEGHHDDEDLKSRLPPPPRPLSPHEIQPSLPGPSSQGDQARWRAARDQQPLHNASRRRPPGVKWSLGQPNLNTVDPKEKAMWMWANVDNLDNFLKEVYSYFLGNGIWSILLTRVLSLLTFAFVVGFSTFLTNCVNYHKVRGSKTLDDILVDRCTTKMSLSSTFLLWLLTFFWIGKAFQCLLGIRRLKHMHDFYHYLLGVSDTDIQTISWQEVVSRLMTLRDANPATAGAVSARHRKFMGSQSKQRMDAHDIANRLMRKENYLIALVNKDILDLTLPIPFLRNRPLFSQTLEWNLNLCIMDYVFNEQGQVRTLFLKDTHRKALSEGLRRRFIFAGFMNIFVAPFIVVYFMMHYFFRYFNEYKKNPSQIGSRQYTPLAEWKFREFNELWHLFERRINMSYPFASRYVDQFPKDKTVQVAGFVAFVSGALASVLALASVVDPELFLGFEITHDRTVLFYLGVFGSVWAVARGMVPEETNVFDPEYALLEVINYTHYFPSQWKGRLHSDEVRREFAELYQMKIVIFLEEILSMIFTPFILWFSLPRCSDRLIDFFREFTVHVDGMGYLCSFAVFDFKKGTNVITQGDRREPARQDLRADYFATKDGKMLASYYGFLDNYGANPRGAHPSTKRQFHPPPAFPTLGSPSAMDLGHLGDRADPPQARPFAGQQSTFGPSRFGPTGLADHGSPAPSMLLDPHHQPSASGFRTAHRTAFSRYRSSRAAPPISGAILDDDESPSAPNRNGSARSAAGAPAPPGGSSGGGVGASDSNLEDSWRMNLTGDTDDEDAGAGGENADAIAGGAGVLGLIQQFQRVNQDGRGRTAVGL.

The interval 1 to 197 (MMTSNILSRF…GVKWSLGQPN (197 aa)) is disordered. Topologically, residues 1-232 (MMTSNILSRF…EVYSYFLGNG (232 aa)) are cytoplasmic. Basic and acidic residues-rich tracts occupy residues 35–57 (VEERAGLTLEDGHGGHYTDHELQ), 75–85 (FLARESHHRVP), and 129–139 (EGHHDDEDLKS). A helical membrane pass occupies residues 233-253 (IWSILLTRVLSLLTFAFVVGF). The Lumenal portion of the chain corresponds to 254–289 (STFLTNCVNYHKVRGSKTLDDILVDRCTTKMSLSST). The chain crosses the membrane as a helical span at residues 290–310 (FLLWLLTFFWIGKAFQCLLGI). At 311–431 (RRLKHMHDFY…NLCIMDYVFN (121 aa)) the chain is on the cytoplasmic side. An intramembrane segment occupies 432 to 477 (EQGQVRTLFLKDTHRKALSEGLRRRFIFAGFMNIFVAPFIVVYFMM). Over 478-542 (HYFFRYFNEY…DQFPKDKTVQ (65 aa)) the chain is Cytoplasmic. The chain crosses the membrane as a helical span at residues 543–563 (VAGFVAFVSGALASVLALASV). At 564–578 (VDPELFLGFEITHDR) the chain is on the lumenal side. Residues 579-599 (TVLFYLGVFGSVWAVARGMVP) form a helical membrane-spanning segment. Over 600–645 (EETNVFDPEYALLEVINYTHYFPSQWKGRLHSDEVRREFAELYQMK) the chain is Cytoplasmic. An intramembrane segment occupies 646–666 (IVIFLEEILSMIFTPFILWFS). Residues 667 to 949 (LPRCSDRLID…DGRGRTAVGL (283 aa)) are Cytoplasmic-facing. The disordered stretch occupies residues 748-919 (GAHPSTKRQF…DAGAGGENAD (172 aa)).

Belongs to the ATG9 family. In terms of assembly, homotrimer; forms a homotrimer with a central pore that forms a path between the two membrane leaflets. Post-translationally, phosphorylated by atg1. Atg1 phosphorylation is required for preautophagosome elongation.

The protein localises to the preautophagosomal structure membrane. It is found in the cytoplasmic vesicle membrane. Its subcellular location is the golgi apparatus membrane. The protein resides in the endoplasmic reticulum membrane. The catalysed reaction is a 1,2-diacyl-sn-glycero-3-phosphocholine(in) = a 1,2-diacyl-sn-glycero-3-phosphocholine(out). It catalyses the reaction a 1,2-diacyl-sn-glycero-3-phospho-L-serine(in) = a 1,2-diacyl-sn-glycero-3-phospho-L-serine(out). The enzyme catalyses a 1,2-diacyl-sn-glycero-3-phosphoethanolamine(in) = a 1,2-diacyl-sn-glycero-3-phosphoethanolamine(out). It carries out the reaction a 1,2-diacyl-sn-glycero-3-phospho-(1D-myo-inositol-3-phosphate)(in) = a 1,2-diacyl-sn-glycero-3-phospho-(1D-myo-inositol-3-phosphate)(out). Functionally, phospholipid scramblase involved in autophagy and cytoplasm to vacuole transport (Cvt) vesicle formation. Cycles between the preautophagosomal structure/phagophore assembly site (PAS) and the cytoplasmic vesicle pool and supplies membrane for the growing autophagosome. Lipid scramblase activity plays a key role in preautophagosomal structure/phagophore assembly by distributing the phospholipids that arrive through atg2 from the cytoplasmic to the luminal leaflet of the bilayer, thereby driving autophagosomal membrane expansion. Required for mitophagy. Also involved in endoplasmic reticulum-specific autophagic process and is essential for the survival of cells subjected to severe ER stress. Different machineries are required for anterograde trafficking to the PAS during either the Cvt pathway or bulk autophagy and for retrograde trafficking. This chain is Autophagy-related protein 9 (atg9), found in Aspergillus clavatus (strain ATCC 1007 / CBS 513.65 / DSM 816 / NCTC 3887 / NRRL 1 / QM 1276 / 107).